The sequence spans 258 residues: Granzyme K (258 aa).

The signal sequence occupies residues 1-23 (MSFSSSALVFLVAGIYMSSESFH). The propeptide at 24–25 (TE) is activation peptide. The Peptidase S1 domain maps to 26 to 253 (IIGGREVQPH…YQTWIKSKLA (228 aa)). A disulfide bridge links Cys51 with Cys67. Residues His66 and Asp110 each act as charge relay system in the active site. 3 disulfide bridges follow: Cys143-Cys214, Cys175-Cys193, and Cys204-Cys228. The active-site Charge relay system is the Ser208.

It belongs to the peptidase S1 family. Granzyme subfamily. As to expression, speen, lungs and liver non-parenchymal cells.

It is found in the cytoplasmic granule. The polypeptide is Granzyme K (Gzmk) (Rattus norvegicus (Rat)).